A 309-amino-acid polypeptide reads, in one-letter code: Cytochrome c biogenesis protein CcsA (309 aa).

8 consecutive transmembrane segments (helical) span residues 18 to 38 (LGLL…GAVF), 43 to 63 (SFAV…QLLF), 73 to 93 (ISNL…GQLL), 102 to 122 (IIPS…CFVL), 148 to 168 (VMLS…VLFI), 216 to 236 (SILI…VWAN), 250 to 267 (TWAF…HMRI), and 279 to 299 (LAST…FLGI).

Belongs to the CcmF/CycK/Ccl1/NrfE/CcsA family. As to quaternary structure, may interact with ccs1.

The protein localises to the cellular thylakoid membrane. Its function is as follows. Required during biogenesis of c-type cytochromes (cytochrome c6 and cytochrome f) at the step of heme attachment. The protein is Cytochrome c biogenesis protein CcsA of Prochlorococcus marinus (strain MIT 9301).